Consider the following 417-residue polypeptide: Cobalamin binding intrinsic factor (417 aa).

The signal sequence occupies residues 1 to 18; the sequence is MAWLTLYLLSVLWAVAGT. 3 disulfide bridges follow: Cys-26-Cys-246, Cys-103-Cys-288, and Cys-143-Cys-182. A cob(II)alamin-binding site is contributed by Asp-171. A Phosphoserine modification is found at Ser-191. Positions 222 and 270 each coordinate cob(II)alamin. N-linked (GlcNAc...) asparagine glycans are attached at residues Asn-311 and Asn-330. Cob(II)alamin contacts are provided by residues 365–370 and 386–395; these read SWGLIV and WEFLSGKTPL. Asn-413 carries an N-linked (GlcNAc...) asparagine glycan.

The protein belongs to the eukaryotic cobalamin transport proteins family. In terms of assembly, interacts with CUBN (via CUB domains). As to expression, gastric mucosa.

It localises to the secreted. Its function is as follows. Promotes absorption of the essential vitamin cobalamin (Cbl) in the ileum. After interaction with CUBN, the CBLIF-cobalamin complex is internalized via receptor-mediated endocytosis. In Mus musculus (Mouse), this protein is Cobalamin binding intrinsic factor (Cblif).